The following is a 510-amino-acid chain: ATP synthase subunit alpha 1 (510 aa).

167 to 174 (GDRATGKT) is a binding site for ATP.

Belongs to the ATPase alpha/beta chains family. F-type ATPases have 2 components, CF(1) - the catalytic core - and CF(0) - the membrane proton channel. CF(1) has five subunits: alpha(3), beta(3), gamma(1), delta(1), epsilon(1). CF(0) has three main subunits: a(1), b(2) and c(9-12). The alpha and beta chains form an alternating ring which encloses part of the gamma chain. CF(1) is attached to CF(0) by a central stalk formed by the gamma and epsilon chains, while a peripheral stalk is formed by the delta and b chains.

It is found in the cell inner membrane. The catalysed reaction is ATP + H2O + 4 H(+)(in) = ADP + phosphate + 5 H(+)(out). In terms of biological role, produces ATP from ADP in the presence of a proton gradient across the membrane. The alpha chain is a regulatory subunit. The sequence is that of ATP synthase subunit alpha 1 from Paraburkholderia xenovorans (strain LB400).